Consider the following 608-residue polypeptide: MMEQVCDVFDIYAICACCKVESKNEGKKNEVFNNYTFRGLGNKGVLPWKCNSLDMKYFRAVTTYVNESKYEKLKYKRCKYLNKETVDNVNDMPNSKKLQNVVVMGRTNWESIPKKFKPLSNRINVILSRTLKKEDFDEDVYIINKVEDLIVLLGKLNYYKCFIIGGSVVYQEFLEKKLIKKIYFTRINSTYECDVFFPEINENEYQIISVSDVYTSNNTTLDFIIYKKTNNKMLNEQNCIKGEEKNNDMPLKNDDKDTCHMKKLTEFYKNVDKYKINYENDDDDEEEDDFVYFNFNKEKEEKNKNSIHPNDFQIYNSLKYKYHPEYQYLNIIYDIMMNGNKQSDRTGVGVLSKFGYIMKFDLSQYFPLLTTKKLFLRGIIEELLWFIRGETNGNTLLNKNVRIWEANGTREFLDNRKLFHREVNDLGPIYGFQWRHFGAEYTNMYDNYENKGVDQLKNIINLIKNDPTSRRILLCAWNVKDLDQMALPPCHILCQFYVFDGKLSCIMYQRSCDLGLGVPFNIASYSIFTHMIAQVCNLQPAQFIHVLGNAHVYNNHIDSLKIQLNRIPYPFPTLKLNPDIKNIEDFTISDFTIQNYVHHEKISMDMAA.

The 219-residue stretch at aspartate 10 to lysine 228 folds into the DHFR domain. A substrate-binding site is contributed by isoleucine 14 to cysteine 15. NADP(+) is bound at residue alanine 16. Valine 31 is a substrate binding site. Glycine 39 to valine 45 contacts NADP(+). Positions 54 and 108 each coordinate substrate. Residues arginine 106–asparagine 108, serine 128–threonine 130, and asparagine 144 contribute to the NADP(+) site. Substrate contacts are provided by isoleucine 164, tyrosine 170, and threonine 185. NADP(+) is bound at residue glycine 165–glutamate 172. The thymidylate synthase stretch occupies residues tyrosine 322–alanine 608. Arginine 345 provides a ligand contact to dUMP. Cysteine 490 is an active-site residue. DUMP contacts are provided by residues histidine 491, glutamine 509–aspartate 513, asparagine 521, and histidine 551–tyrosine 553.

In the N-terminal section; belongs to the dihydrofolate reductase family. The protein in the C-terminal section; belongs to the thymidylate synthase family. Homodimer.

The enzyme catalyses (6S)-5,6,7,8-tetrahydrofolate + NADP(+) = 7,8-dihydrofolate + NADPH + H(+). The catalysed reaction is dUMP + (6R)-5,10-methylene-5,6,7,8-tetrahydrofolate = 7,8-dihydrofolate + dTMP. It functions in the pathway cofactor biosynthesis; tetrahydrofolate biosynthesis; 5,6,7,8-tetrahydrofolate from 7,8-dihydrofolate: step 1/1. Its function is as follows. Bifunctional enzyme. Involved in de novo dTMP biosynthesis. Key enzyme in folate metabolism. Catalyzes an essential reaction for de novo glycine and purine synthesis, DNA precursor synthesis, and for the conversion of dUMP to dTMP. The chain is Bifunctional dihydrofolate reductase-thymidylate synthase from Plasmodium falciparum (isolate K1 / Thailand).